Consider the following 359-residue polypeptide: Protein FLX-like 2 (359 aa).

Over residues 1–16 (MESKGRIHPSHHHMRR) the composition is skewed to basic residues. Residues 1–27 (MESKGRIHPSHHHMRRPLPGPGGCIAH) are disordered. A coiled-coil region spans residues 83–236 (HGSLRQELAA…EKLQAQLMNN (154 aa)). The disordered stretch occupies residues 303 to 359 (TQPGYFPQRPGYNFPRGPPGSYDPTTRLPTGPYGAPFPPGPSNNTPYAGTHGNPSRR).

It belongs to the FLX family. Interacts with FRI.

Has no transcriptional activation activity. The sequence is that of Protein FLX-like 2 (FLXL2) from Arabidopsis thaliana (Mouse-ear cress).